The chain runs to 219 residues: Leucyl/phenylalanyl-tRNA--protein transferase (219 aa).

Belongs to the L/F-transferase family.

It is found in the cytoplasm. The enzyme catalyses N-terminal L-lysyl-[protein] + L-leucyl-tRNA(Leu) = N-terminal L-leucyl-L-lysyl-[protein] + tRNA(Leu) + H(+). It carries out the reaction N-terminal L-arginyl-[protein] + L-leucyl-tRNA(Leu) = N-terminal L-leucyl-L-arginyl-[protein] + tRNA(Leu) + H(+). It catalyses the reaction L-phenylalanyl-tRNA(Phe) + an N-terminal L-alpha-aminoacyl-[protein] = an N-terminal L-phenylalanyl-L-alpha-aminoacyl-[protein] + tRNA(Phe). Its function is as follows. Functions in the N-end rule pathway of protein degradation where it conjugates Leu, Phe and, less efficiently, Met from aminoacyl-tRNAs to the N-termini of proteins containing an N-terminal arginine or lysine. The protein is Leucyl/phenylalanyl-tRNA--protein transferase of Leptospira borgpetersenii serovar Hardjo-bovis (strain JB197).